We begin with the raw amino-acid sequence, 189 residues long: MQIWVGLGNPGAQYAMHRHNVGFMAVDTIAEVHRFDPWKKQFQGWSATGRIGNVKVLLLKPATFMNESGRSVGEAMRFFKRETGDVTVFHDELDLAPFKVKVKTGGGTAGHNGLRSTEAHIGNAFRRVRIGIGHPGHKDRVTGYVLGNYVKAELDPLAGMLGAIASEADWLASGDDARFMSEIALRLAD.

Y14 contributes to the tRNA binding site. H19 (proton acceptor) is an active-site residue. Residues F64, N66, and N112 each contribute to the tRNA site.

The protein belongs to the PTH family. Monomer.

Its subcellular location is the cytoplasm. It catalyses the reaction an N-acyl-L-alpha-aminoacyl-tRNA + H2O = an N-acyl-L-amino acid + a tRNA + H(+). In terms of biological role, hydrolyzes ribosome-free peptidyl-tRNAs (with 1 or more amino acids incorporated), which drop off the ribosome during protein synthesis, or as a result of ribosome stalling. Its function is as follows. Catalyzes the release of premature peptidyl moieties from peptidyl-tRNA molecules trapped in stalled 50S ribosomal subunits, and thus maintains levels of free tRNAs and 50S ribosomes. In Rhizorhabdus wittichii (strain DSM 6014 / CCUG 31198 / JCM 15750 / NBRC 105917 / EY 4224 / RW1) (Sphingomonas wittichii), this protein is Peptidyl-tRNA hydrolase.